The following is a 136-amino-acid chain: Peptide methionine sulfoxide reductase MsrB (136 aa).

A MsrB domain is found at D9 to K136. Residues C53, C56, C102, and C105 each contribute to the Zn(2+) site. The active-site Nucleophile is C125.

Belongs to the MsrB Met sulfoxide reductase family. The cofactor is Zn(2+).

It catalyses the reaction L-methionyl-[protein] + [thioredoxin]-disulfide + H2O = L-methionyl-(R)-S-oxide-[protein] + [thioredoxin]-dithiol. The protein is Peptide methionine sulfoxide reductase MsrB of Polaromonas sp. (strain JS666 / ATCC BAA-500).